A 234-amino-acid chain; its full sequence is Leucyl/phenylalanyl-tRNA--protein transferase (234 aa).

It belongs to the L/F-transferase family.

It localises to the cytoplasm. It carries out the reaction N-terminal L-lysyl-[protein] + L-leucyl-tRNA(Leu) = N-terminal L-leucyl-L-lysyl-[protein] + tRNA(Leu) + H(+). The catalysed reaction is N-terminal L-arginyl-[protein] + L-leucyl-tRNA(Leu) = N-terminal L-leucyl-L-arginyl-[protein] + tRNA(Leu) + H(+). It catalyses the reaction L-phenylalanyl-tRNA(Phe) + an N-terminal L-alpha-aminoacyl-[protein] = an N-terminal L-phenylalanyl-L-alpha-aminoacyl-[protein] + tRNA(Phe). Its function is as follows. Functions in the N-end rule pathway of protein degradation where it conjugates Leu, Phe and, less efficiently, Met from aminoacyl-tRNAs to the N-termini of proteins containing an N-terminal arginine or lysine. This is Leucyl/phenylalanyl-tRNA--protein transferase from Escherichia fergusonii (strain ATCC 35469 / DSM 13698 / CCUG 18766 / IAM 14443 / JCM 21226 / LMG 7866 / NBRC 102419 / NCTC 12128 / CDC 0568-73).